Reading from the N-terminus, the 276-residue chain is 3,4-dihydroxyphenylacetate 2,3-dioxygenase (276 aa).

Fe cation is required as a cofactor.

It carries out the reaction 3,4-dihydroxyphenylacetate + O2 = 2-hydroxy-5-carboxymethylmuconate semialdehyde + H(+). It functions in the pathway aromatic compound metabolism; 4-hydroxyphenylacetate degradation; pyruvate and succinate semialdehyde from 4-hydroxyphenylacetate: step 2/7. Transforms homoprotocatechuic acid (HPC) into 5-carboxymethyl-2-hydroxy-muconic semialdehyde (CHMS). In Escherichia coli, this protein is 3,4-dihydroxyphenylacetate 2,3-dioxygenase (hpcB).